The following is a 166-amino-acid chain: NADH-quinone oxidoreductase subunit I (166 aa).

4Fe-4S ferredoxin-type domains lie at 57–87 (LRRYPNGEERCIACKLCEAVCPALAITIESE) and 97–126 (TRYDIDMFKCINCGLCEESCPVDSIVVTPI). [4Fe-4S] cluster is bound by residues C67, C70, C73, C77, C106, C109, C112, and C116.

The protein belongs to the complex I 23 kDa subunit family. NDH-1 is composed of 14 different subunits. Subunits NuoA, H, J, K, L, M, N constitute the membrane sector of the complex. [4Fe-4S] cluster serves as cofactor.

The protein resides in the cell inner membrane. It carries out the reaction a quinone + NADH + 5 H(+)(in) = a quinol + NAD(+) + 4 H(+)(out). Its function is as follows. NDH-1 shuttles electrons from NADH, via FMN and iron-sulfur (Fe-S) centers, to quinones in the respiratory chain. The immediate electron acceptor for the enzyme in this species is believed to be ubiquinone. Couples the redox reaction to proton translocation (for every two electrons transferred, four hydrogen ions are translocated across the cytoplasmic membrane), and thus conserves the redox energy in a proton gradient. This Legionella pneumophila (strain Lens) protein is NADH-quinone oxidoreductase subunit I.